The chain runs to 308 residues: Aspartate carbamoyltransferase catalytic subunit (308 aa).

Carbamoyl phosphate is bound by residues R57 and T58. An L-aspartate-binding site is contributed by K86. Positions 107, 135, and 138 each coordinate carbamoyl phosphate. The L-aspartate site is built by R168 and R228. Positions 267 and 268 each coordinate carbamoyl phosphate.

This sequence belongs to the aspartate/ornithine carbamoyltransferase superfamily. ATCase family. As to quaternary structure, heterododecamer (2C3:3R2) of six catalytic PyrB chains organized as two trimers (C3), and six regulatory PyrI chains organized as three dimers (R2).

The enzyme catalyses carbamoyl phosphate + L-aspartate = N-carbamoyl-L-aspartate + phosphate + H(+). The protein operates within pyrimidine metabolism; UMP biosynthesis via de novo pathway; (S)-dihydroorotate from bicarbonate: step 2/3. Catalyzes the condensation of carbamoyl phosphate and aspartate to form carbamoyl aspartate and inorganic phosphate, the committed step in the de novo pyrimidine nucleotide biosynthesis pathway. The sequence is that of Aspartate carbamoyltransferase catalytic subunit from Leptospira interrogans serogroup Icterohaemorrhagiae serovar Lai (strain 56601).